We begin with the raw amino-acid sequence, 149 residues long: Transcriptional repressor NrdR (149 aa).

Residues 3–34 fold into a zinc finger; that stretch reads CPFCSAVDTKVIDSRLVAEGHQVRRRRECLLC. The 91-residue stretch at 49–139 folds into the ATP-cone domain; that stretch reads PRVIKSNGSR…VYRSFEDIRE (91 aa).

Belongs to the NrdR family. Zn(2+) serves as cofactor.

Functionally, negatively regulates transcription of bacterial ribonucleotide reductase nrd genes and operons by binding to NrdR-boxes. The polypeptide is Transcriptional repressor NrdR (Aeromonas hydrophila subsp. hydrophila (strain ATCC 7966 / DSM 30187 / BCRC 13018 / CCUG 14551 / JCM 1027 / KCTC 2358 / NCIMB 9240 / NCTC 8049)).